The following is a 112-amino-acid chain: Cytochrome c 2.1 (112 aa).

Heme c is bound by residues cysteine 20, cysteine 23, histidine 24, and methionine 85.

It belongs to the cytochrome c family. In terms of processing, binds 1 heme c group covalently per subunit.

The protein localises to the mitochondrion intermembrane space. Functionally, electron carrier protein. The oxidized form of the cytochrome c heme group can accept an electron from the heme group of the cytochrome c1 subunit of cytochrome reductase. Cytochrome c then transfers this electron to the cytochrome oxidase complex, the final protein carrier in the mitochondrial electron-transport chain. This chain is Cytochrome c 2.1, found in Caenorhabditis briggsae.